The primary structure comprises 545 residues: ATP synthase F(1) complex subunit alpha, mitochondrial (545 aa).

Gln216, Gly218, Lys219, Thr220, and Ser221 together coordinate ATP. Thr220 is a binding site for Mg(2+). Residue Asp304 participates in Mg(2+) binding. ATP is bound by residues Gln465 and Gln467.

Belongs to the ATPase alpha/beta chains family. Homotrimer. Component of the ATP synthase complex composed at least of ATP5F1A/subunit alpha, ATP5F1B/subunit beta, ATP5MC1/subunit c (homooctomer), MT-ATP6/subunit a, MT-ATP8/subunit 8, ATP5ME/subunit e, ATP5MF/subunit f, ATP5MG/subunit g, ATP5MK/subunit k, ATP5MJ/subunit j, ATP5F1C/subunit gamma, ATP5F1D/subunit delta, ATP5F1E/subunit epsilon, ATP5PF/subunit F6, ATP5PB/subunit b, ATP5PD/subunit d, ATP5PO/subunit OSCP. ATP synthase complex consists of a soluble F(1) head domain (subunits alpha(3) and beta(3)) - the catalytic core - and a membrane F(0) domain - the membrane proton channel (subunits c, a, 8, e, f, g, k and j). These two domains are linked by a central stalk (subunits gamma, delta, and epsilon) rotating inside the F1 region and a stationary peripheral stalk (subunits F6, b, d, and OSCP).

It localises to the mitochondrion inner membrane. Subunit alpha, of the mitochondrial membrane ATP synthase complex (F(1)F(0) ATP synthase or Complex V) that produces ATP from ADP in the presence of a proton gradient across the membrane which is generated by electron transport complexes of the respiratory chain. ATP synthase complex consist of a soluble F(1) head domain - the catalytic core - and a membrane F(1) domain - the membrane proton channel. These two domains are linked by a central stalk rotating inside the F(1) region and a stationary peripheral stalk. During catalysis, ATP synthesis in the catalytic domain of F(1) is coupled via a rotary mechanism of the central stalk subunits to proton translocation. In vivo, can only synthesize ATP although its ATP hydrolase activity can be activated artificially in vitro. With the catalytic subunit beta (ATP5F1B), forms the catalytic core in the F(1) domain. Subunit alpha does not bear the catalytic high-affinity ATP-binding sites. The chain is ATP synthase F(1) complex subunit alpha, mitochondrial from Xenopus laevis (African clawed frog).